The sequence spans 1705 residues: Protein TIC 214 (1705 aa).

Helical transmembrane passes span 18–38 (IINS…FSIG), 67–87 (FITG…HLAL), 127–147 (LSIQ…HFIL), 175–195 (VGWI…LVWI), and 218–238 (SMSM…HYLG).

This sequence belongs to the TIC214 family. Part of the Tic complex.

The protein localises to the plastid. Its subcellular location is the chloroplast inner membrane. In terms of biological role, involved in protein precursor import into chloroplasts. May be part of an intermediate translocation complex acting as a protein-conducting channel at the inner envelope. This Helianthus annuus (Common sunflower) protein is Protein TIC 214.